The chain runs to 108 residues: uncharacterized protein (108 aa).

The N-myristoyl glycine; by host moiety is linked to residue Gly-2.

This is an uncharacterized protein from Acanthamoeba polyphaga (Amoeba).